Consider the following 192-residue polypeptide: 7-methyl-GTP pyrophosphatase (192 aa).

The Proton acceptor role is filled by Asp69.

Belongs to the Maf family. YceF subfamily. A divalent metal cation is required as a cofactor.

It localises to the cytoplasm. It catalyses the reaction N(7)-methyl-GTP + H2O = N(7)-methyl-GMP + diphosphate + H(+). In terms of biological role, nucleoside triphosphate pyrophosphatase that hydrolyzes 7-methyl-GTP (m(7)GTP). May have a dual role in cell division arrest and in preventing the incorporation of modified nucleotides into cellular nucleic acids. The sequence is that of 7-methyl-GTP pyrophosphatase (maf-1) from Pseudomonas syringae pv. tomato (strain ATCC BAA-871 / DC3000).